Consider the following 131-residue polypeptide: Ribosome-binding factor A (131 aa).

The protein belongs to the RbfA family. As to quaternary structure, monomer. Binds 30S ribosomal subunits, but not 50S ribosomal subunits or 70S ribosomes.

The protein resides in the cytoplasm. One of several proteins that assist in the late maturation steps of the functional core of the 30S ribosomal subunit. Associates with free 30S ribosomal subunits (but not with 30S subunits that are part of 70S ribosomes or polysomes). Required for efficient processing of 16S rRNA. May interact with the 5'-terminal helix region of 16S rRNA. The sequence is that of Ribosome-binding factor A from Picosynechococcus sp. (strain ATCC 27264 / PCC 7002 / PR-6) (Agmenellum quadruplicatum).